The chain runs to 139 residues: Putative pre-16S rRNA nuclease (139 aa).

This sequence belongs to the YqgF nuclease family.

Its subcellular location is the cytoplasm. Could be a nuclease involved in processing of the 5'-end of pre-16S rRNA. The chain is Putative pre-16S rRNA nuclease from Streptococcus pneumoniae serotype 19F (strain G54).